The sequence spans 335 residues: Nuclear transcription factor Y subunit gamma (335 aa).

Belongs to the NFYC/HAP5 subunit family. As to quaternary structure, heterotrimeric transcription factor composed of three components, NF-YA, NF-YB and NF-YC. NF-YB and NF-YC must interact and dimerize for NF-YA association and DNA binding.

The protein resides in the nucleus. In terms of biological role, component of the sequence-specific heterotrimeric transcription factor (NF-Y) which specifically recognizes a 5'-CCAAT-3' box motif found in the promoters of its target genes. NF-Y can function as both an activator and a repressor, depending on its interacting cofactors. In Pongo abelii (Sumatran orangutan), this protein is Nuclear transcription factor Y subunit gamma (NFYC).